The primary structure comprises 364 residues: Tubulin alpha-2 chain (364 aa).

GTP contacts are provided by Gly59, Thr60, Thr94, Asn121, and Asn144. The active site involves Glu170.

Belongs to the tubulin family. As to quaternary structure, dimer of alpha and beta chains. A typical microtubule is a hollow water-filled tube with an outer diameter of 25 nm and an inner diameter of 15 nM. Alpha-beta heterodimers associate head-to-tail to form protofilaments running lengthwise along the microtubule wall with the beta-tubulin subunit facing the microtubule plus end conferring a structural polarity. Microtubules usually have 13 protofilaments but different protofilament numbers can be found in some organisms and specialized cells. Mg(2+) is required as a cofactor. In terms of processing, undergoes a tyrosination/detyrosination cycle, the cyclic removal and re-addition of a C-terminal tyrosine residue by the enzymes tubulin tyrosine carboxypeptidase (TTCP) and tubulin tyrosine ligase (TTL), respectively.

The protein localises to the cytoplasm. Its subcellular location is the cytoskeleton. The catalysed reaction is GTP + H2O = GDP + phosphate + H(+). Its function is as follows. Tubulin is the major constituent of microtubules, a cylinder consisting of laterally associated linear protofilaments composed of alpha- and beta-tubulin heterodimers. Microtubules grow by the addition of GTP-tubulin dimers to the microtubule end, where a stabilizing cap forms. Below the cap, tubulin dimers are in GDP-bound state, owing to GTPase activity of alpha-tubulin. The sequence is that of Tubulin alpha-2 chain (TUBA2) from Anemia phyllitidis (Fern).